The primary structure comprises 95 residues: Aspartyl/glutamyl-tRNA(Asn/Gln) amidotransferase subunit C (95 aa).

This sequence belongs to the GatC family. In terms of assembly, heterotrimer of A, B and C subunits.

The catalysed reaction is L-glutamyl-tRNA(Gln) + L-glutamine + ATP + H2O = L-glutaminyl-tRNA(Gln) + L-glutamate + ADP + phosphate + H(+). It catalyses the reaction L-aspartyl-tRNA(Asn) + L-glutamine + ATP + H2O = L-asparaginyl-tRNA(Asn) + L-glutamate + ADP + phosphate + 2 H(+). Functionally, allows the formation of correctly charged Asn-tRNA(Asn) or Gln-tRNA(Gln) through the transamidation of misacylated Asp-tRNA(Asn) or Glu-tRNA(Gln) in organisms which lack either or both of asparaginyl-tRNA or glutaminyl-tRNA synthetases. The reaction takes place in the presence of glutamine and ATP through an activated phospho-Asp-tRNA(Asn) or phospho-Glu-tRNA(Gln). The protein is Aspartyl/glutamyl-tRNA(Asn/Gln) amidotransferase subunit C of Pseudomonas putida (strain W619).